Consider the following 255-residue polypeptide: Cell division protein DivIB (255 aa).

Residues 1 to 30 lie on the Cytoplasmic side of the membrane; that stretch reads MKNSKVIKLQDRVPKLKNQKKRNKPPVNHR. Residues 31 to 51 form a helical membrane-spanning segment; it reads LILYISILFLLVLFLIYFRSP. The Extracellular segment spans residues 52-255; the sequence is LSNIKKISVF…FKYLDDEKKK (204 aa). Residues 53–121 enclose the POTRA domain; sequence SNIKKISVFG…NKIDIHIEEY (69 aa).

Belongs to the FtsQ/DivIB family. DivIB subfamily.

The protein resides in the cell membrane. Functionally, cell division protein that may be involved in stabilizing or promoting the assembly of the division complex. In Bacillus cytotoxicus (strain DSM 22905 / CIP 110041 / 391-98 / NVH 391-98), this protein is Cell division protein DivIB.